The primary structure comprises 217 residues: Deoxyribose-phosphate aldolase 1 (217 aa).

Asp89 functions as the Proton donor/acceptor in the catalytic mechanism. Lys151 (schiff-base intermediate with acetaldehyde) is an active-site residue. Lys180 acts as the Proton donor/acceptor in catalysis.

This sequence belongs to the DeoC/FbaB aldolase family. DeoC type 1 subfamily.

It localises to the cytoplasm. It carries out the reaction 2-deoxy-D-ribose 5-phosphate = D-glyceraldehyde 3-phosphate + acetaldehyde. It participates in carbohydrate degradation; 2-deoxy-D-ribose 1-phosphate degradation; D-glyceraldehyde 3-phosphate and acetaldehyde from 2-deoxy-alpha-D-ribose 1-phosphate: step 2/2. Catalyzes a reversible aldol reaction between acetaldehyde and D-glyceraldehyde 3-phosphate to generate 2-deoxy-D-ribose 5-phosphate. The sequence is that of Deoxyribose-phosphate aldolase 1 from Cutibacterium acnes (strain DSM 16379 / KPA171202) (Propionibacterium acnes).